The chain runs to 207 residues: Ribonuclease HII (207 aa).

The RNase H type-2 domain occupies 20-207 (QLFAGVDEVG…KPVKRVLGIE (188 aa)). The a divalent metal cation site is built by Asp-26, Glu-27, and Asp-118.

The protein belongs to the RNase HII family. It depends on Mn(2+) as a cofactor. Mg(2+) is required as a cofactor.

It localises to the cytoplasm. The enzyme catalyses Endonucleolytic cleavage to 5'-phosphomonoester.. Endonuclease that specifically degrades the RNA of RNA-DNA hybrids. The sequence is that of Ribonuclease HII from Aliivibrio salmonicida (strain LFI1238) (Vibrio salmonicida (strain LFI1238)).